The chain runs to 470 residues: Glutamate--tRNA ligase (470 aa).

The 'HIGH' region motif lies at 12–22 (PSPTGIFHVGG). Positions 103, 105, 125, and 127 each coordinate Zn(2+). The 'KMSKS' region motif lies at 236–240 (KLSKR). K239 lines the ATP pocket.

This sequence belongs to the class-I aminoacyl-tRNA synthetase family. Glutamate--tRNA ligase type 1 subfamily. In terms of assembly, monomer. Zn(2+) serves as cofactor.

It is found in the cytoplasm. The catalysed reaction is tRNA(Glu) + L-glutamate + ATP = L-glutamyl-tRNA(Glu) + AMP + diphosphate. In terms of biological role, catalyzes the attachment of glutamate to tRNA(Glu) in a two-step reaction: glutamate is first activated by ATP to form Glu-AMP and then transferred to the acceptor end of tRNA(Glu). The sequence is that of Glutamate--tRNA ligase from Frankia casuarinae (strain DSM 45818 / CECT 9043 / HFP020203 / CcI3).